The sequence spans 213 residues: Bcl-2-related ovarian killer protein (213 aa).

S7 is subject to Phosphoserine. The interval 15–45 (MDAFDRSPTDKELVAQAKALGREYVHARLLR) is interactions with ITPR1. Residues K25 and K32 each participate in a glycyl lysine isopeptide (Lys-Gly) (interchain with G-Cter in ubiquitin) cross-link. Positions 32 to 44 (KALGREYVHARLL) match the BH4 motif. A BH3 motif is present at residues 67–83 (VCTVLLRLGDELEQIRP). A nuclear export signal region spans residues 71–79 (LLRLGDELE). The short motif at 113–132 (HIFSAGITWGKVVSLYSVAA) is the BH1 element. Residues K160 and K177 each participate in a glycyl lysine isopeptide (Lys-Gly) (interchain with G-Cter in ubiquitin) cross-link. Residues 165 to 179 (WLRRRGGWTDVLKCV) carry the BH2 motif. A helical transmembrane segment spans residues 190 to 210 (WLVATLCSFGRFLKAAFFLLL).

Belongs to the Bcl-2 family. As to quaternary structure, monomer; positively regulates apoptotic process. Homodimer. Heterodimer. Oligomer; promoted by apoptotic stimuli and BH3-only proteins; mediates constitutive activation. Interacts (via BH4 domain) with ITPR1; enhances BOK expression and stabilization; limits apoptosis and prevents ubiquitination and then degradation; protects ITPR1 from proteolysis by CASP3 during apoptosis. Interacts with ITPR2 and ITPR3; binds most strongly to ITPR2, and barely to ITPR3; regulates their expression. Interacts with XPO1; translocates to the cytoplasm. Interacts with BNIP3; promotes oligomerization. Ubiquitinated by AMFR/gp78 E3 ubiquitin ligase complex; mediates degradation by ubiquitin-proteasome pathway in a VCP/p97-dependent manner; prevents from proapoptotic activity; promotes degradation of newly synthesized proteins that are not ITPR1 associated. In terms of tissue distribution, widely expressed. Highly expressed in brain, kidney, and spleen.

It is found in the mitochondrion membrane. The protein localises to the endoplasmic reticulum membrane. It localises to the mitochondrion inner membrane. Its subcellular location is the cytoplasm. The protein resides in the nucleus. It is found in the mitochondrion. The protein localises to the endoplasmic reticulum. It localises to the mitochondrion outer membrane. Its subcellular location is the early endosome membrane. The protein resides in the recycling endosome membrane. It is found in the nucleus outer membrane. The protein localises to the golgi apparatus. It localises to the cis-Golgi network membrane. Its subcellular location is the trans-Golgi network membrane. The protein resides in the membrane. Its function is as follows. Apoptosis regulator that functions through different apoptotic signaling pathways. Plays a roles as pro-apoptotic protein that positively regulates intrinsic apoptotic process in a BAX- and BAK1-dependent manner or in a BAX- and BAK1-independent manner. In response to endoplasmic reticulum stress promotes mitochondrial apoptosis through downstream BAX/BAK1 activation and positive regulation of PERK-mediated unfolded protein response. Activates apoptosis independently of heterodimerization with survival-promoting BCL2 and BCL2L1 through induction of mitochondrial outer membrane permeabilization, in a BAX- and BAK1-independent manner, in response to inhibition of ERAD-proteasome degradation system, resulting in cytochrome c release. In response to DNA damage, mediates intrinsic apoptotic process in a TP53-dependent manner. Plays a role in granulosa cell apoptosis by CASP3 activation. Plays a roles as anti-apoptotic protein during neuronal apoptotic process, by negatively regulating poly ADP-ribose polymerase-dependent cell death through regulation of neuronal calcium homeostasis and mitochondrial bioenergetics in response to NMDA excitation. In addition to its role in apoptosis, may regulate trophoblast cell proliferation during the early stages of placental development, by acting on G1/S transition through regulation of CCNE1 expression. May also play a role as an inducer of autophagy by disrupting interaction between MCL1 and BECN1. The chain is Bcl-2-related ovarian killer protein from Mus musculus (Mouse).